Reading from the N-terminus, the 277-residue chain is Large ribosomal subunit protein uL2 (277 aa).

Residues 219–277 are disordered; that stretch reads TVRGSVMNPNDHPHGGGEGKAPVGRKAPSTPWGKPALGLKTRNKKAKSDKLIVRRRNEK. Basic and acidic residues predominate over residues 264–277; sequence AKSDKLIVRRRNEK.

This sequence belongs to the universal ribosomal protein uL2 family. As to quaternary structure, part of the 50S ribosomal subunit. Forms a bridge to the 30S subunit in the 70S ribosome.

One of the primary rRNA binding proteins. Required for association of the 30S and 50S subunits to form the 70S ribosome, for tRNA binding and peptide bond formation. It has been suggested to have peptidyltransferase activity; this is somewhat controversial. Makes several contacts with the 16S rRNA in the 70S ribosome. The sequence is that of Large ribosomal subunit protein uL2 from Streptococcus pyogenes serotype M1.